A 122-amino-acid chain; its full sequence is UPF0102 protein RHECIAT_CH0000358 (122 aa).

The protein belongs to the UPF0102 family.

This Rhizobium etli (strain CIAT 652) protein is UPF0102 protein RHECIAT_CH0000358.